A 724-amino-acid chain; its full sequence is Ribosomal RNA processing protein 1 homolog B (724 aa).

Residues 331–576 are disordered; that stretch reads NGAPLSSAED…SKKKKKTMKL (246 aa). A phosphoserine mark is found at S336 and S370. Basic residues predominate over residues 373–386; sequence HIHKKKRKKRKRSH. S432 and S438 each carry phosphoserine. A compositionally biased stretch (basic residues) spans 448–461; the sequence is HNKRKRPRKKKLRA. Low complexity predominate over residues 483–496; it reads SGHSQSSAAHISSS. S494 carries the post-translational modification Phosphoserine. Polar residues-rich tracts occupy residues 513–528 and 548–564; these read DSSS…TPTS and KTAS…SQKP. K618 is subject to N6-acetyllysine. A disordered region spans residues 625-649; that stretch reads AKNSSATRPQGPAGQLNKTPSSSKK. The segment covering 640–649 has biased composition (polar residues); it reads LNKTPSSSKK. Phosphoserine occurs at positions 668 and 672. R678 bears the Citrulline mark. A disordered region spans residues 687–724; the sequence is PLHGVLKTATSSPASTPLSPMRLPATTPKRRPRAADFF. A Phosphothreonine modification is found at T694. Over residues 694 to 706 the composition is skewed to low complexity; sequence TATSSPASTPLSP. A phosphoserine mark is found at S698 and S701.

Belongs to the RRP1 family. Interacts with the transcriptional activator E2F1. Interacts with serine/threonine-protein phosphatase PP1 subunits PPP1CB and PPP1CC but not with PPP1CA. Interacts with 60S ribosomal proteins RPL5 and RPL27, ribosomal processing protein RRP1/NNP1 and other nucleolar proteins including NOP2/NOL1 and FBL. Also interacts with nucleolar protein NPM1/B23. Interacts with splicing factor SRSF1 and LUC7L3/CROP. Interacts with GTPase activator SIPA1. Interacts with H1-10, NCL, PARP1, TRIM28 and YBX3. Citrullinated by PADI4.

It is found in the nucleus. The protein resides in the nucleolus. Its subcellular location is the nucleoplasm. It localises to the chromosome. Positively regulates DNA damage-induced apoptosis by acting as a transcriptional coactivator of proapoptotic target genes of the transcriptional activator E2F1. Likely to play a role in ribosome biogenesis by targeting serine/threonine protein phosphatase PP1 to the nucleolus. Involved in regulation of mRNA splicing. Inhibits SIPA1 GTPase activity. Involved in regulating expression of extracellular matrix genes. Associates with chromatin and may play a role in modulating chromatin structure. The polypeptide is Ribosomal RNA processing protein 1 homolog B (Rrp1b) (Mus musculus (Mouse)).